Consider the following 185-residue polypeptide: Tetratricopeptide repeat protein 36 homolog (185 aa).

TPR repeat units follow at residues 53 to 86, 88 to 119, and 125 to 158; these read SREL…AQRA, VLNN…ANDQ, and CHAH…GSKF.

It belongs to the TTC36 family.

This is Tetratricopeptide repeat protein 36 homolog from Drosophila melanogaster (Fruit fly).